The following is a 269-amino-acid chain: Interleukin-1 beta (269 aa).

Residues 1 to 116 constitute a propeptide that is removed on maturation; the sequence is MAEVPELASE…TRNNDACVHD (116 aa).

Belongs to the IL-1 family. As to quaternary structure, monomer. In its precursor form, weakly interacts with full-length MEFV; the mature cytokine does not interact at all. Interacts with integrins ITGAV:ITGBV and ITGA5:ITGB1; integrin-binding is required for IL1B signaling. Interacts with cargo receptor TMED10; the interaction is direct and is required for the secretion of IL1B mature form. Interacts with HSP90AB1; the interaction facilitates cargo translocation into the ERGIC. Interacts with HSP90B1; the interaction facilitates cargo translocation into the ERGIC.

It localises to the cytoplasm. The protein localises to the cytosol. Its subcellular location is the secreted. It is found in the lysosome. The protein resides in the extracellular exosome. Its function is as follows. Potent pro-inflammatory cytokine. Initially discovered as the major endogenous pyrogen, induces prostaglandin synthesis, neutrophil influx and activation, T-cell activation and cytokine production, B-cell activation and antibody production, and fibroblast proliferation and collagen production. Promotes Th17 differentiation of T-cells. Synergizes with IL12/interleukin-12 to induce IFNG synthesis from T-helper 1 (Th1) cells. Plays a role in angiogenesis by inducing VEGF production synergistically with TNF and IL6. Involved in transduction of inflammation downstream of pyroptosis: its mature form is specifically released in the extracellular milieu by passing through the gasdermin-D (GSDMD) pore. The polypeptide is Interleukin-1 beta (IL1B) (Macaca mulatta (Rhesus macaque)).